The primary structure comprises 379 residues: UDP-N-acetylglucosamine--N-acetylmuramyl-(pentapeptide) pyrophosphoryl-undecaprenol N-acetylglucosamine transferase (379 aa).

UDP-N-acetyl-alpha-D-glucosamine is bound by residues 19–21 (TGG), Asn133, Arg174, Ser207, Ile261, and Gln306.

This sequence belongs to the glycosyltransferase 28 family. MurG subfamily.

The protein localises to the cell inner membrane. The catalysed reaction is di-trans,octa-cis-undecaprenyl diphospho-N-acetyl-alpha-D-muramoyl-L-alanyl-D-glutamyl-meso-2,6-diaminopimeloyl-D-alanyl-D-alanine + UDP-N-acetyl-alpha-D-glucosamine = di-trans,octa-cis-undecaprenyl diphospho-[N-acetyl-alpha-D-glucosaminyl-(1-&gt;4)]-N-acetyl-alpha-D-muramoyl-L-alanyl-D-glutamyl-meso-2,6-diaminopimeloyl-D-alanyl-D-alanine + UDP + H(+). It functions in the pathway cell wall biogenesis; peptidoglycan biosynthesis. In terms of biological role, cell wall formation. Catalyzes the transfer of a GlcNAc subunit on undecaprenyl-pyrophosphoryl-MurNAc-pentapeptide (lipid intermediate I) to form undecaprenyl-pyrophosphoryl-MurNAc-(pentapeptide)GlcNAc (lipid intermediate II). The chain is UDP-N-acetylglucosamine--N-acetylmuramyl-(pentapeptide) pyrophosphoryl-undecaprenol N-acetylglucosamine transferase from Porphyromonas gingivalis (strain ATCC BAA-308 / W83).